A 339-amino-acid chain; its full sequence is Anthranilate phosphoribosyltransferase (339 aa).

Residues glycine 80, 83–84, threonine 88, 90–93, 108–116, and serine 120 contribute to the 5-phospho-alpha-D-ribose 1-diphosphate site; these read GD, NIST, and KHGNRAVSS. Glycine 80 is a binding site for anthranilate. Position 92 (serine 92) interacts with Mg(2+). Asparagine 111 is an anthranilate binding site. Arginine 166 is a binding site for anthranilate. Aspartate 225 and glutamate 226 together coordinate Mg(2+).

The protein belongs to the anthranilate phosphoribosyltransferase family. Homodimer. Mg(2+) serves as cofactor.

It carries out the reaction N-(5-phospho-beta-D-ribosyl)anthranilate + diphosphate = 5-phospho-alpha-D-ribose 1-diphosphate + anthranilate. It functions in the pathway amino-acid biosynthesis; L-tryptophan biosynthesis; L-tryptophan from chorismate: step 2/5. Functionally, catalyzes the transfer of the phosphoribosyl group of 5-phosphorylribose-1-pyrophosphate (PRPP) to anthranilate to yield N-(5'-phosphoribosyl)-anthranilate (PRA). The polypeptide is Anthranilate phosphoribosyltransferase (Caldanaerobacter subterraneus subsp. tengcongensis (strain DSM 15242 / JCM 11007 / NBRC 100824 / MB4) (Thermoanaerobacter tengcongensis)).